We begin with the raw amino-acid sequence, 490 residues long: MEPLGSTLTATYAHPQPAATNFLPAIGTLTSSYRNRFPHRNLTHSLSLPWRPSTYYKTAYNYPTLAPLSSTSQSVCESTMLPFVSNRTTLFTRYTPDDWYRSTLVGFQESNCSRHNSERLRVDTSRLIQDKYQQIRKTQADSTQNLGERVNDIAFWKSEIIHELDEMIGETNALTDIKRRLERGLIETDAPLQVARECLFHREKRMGIDLVHDEAEKELLTEVETVLCCQERMRRHLDKAIAQLASDRSAQHELEKDLSDKQAALRIDDKCKHLRNTSQGVSYFRGVENVDATVSVPESWAKFTDDNVLRSQSERAASAKLREDTENLLIVIANEMWNQFNKVNVAFTNRIAETVDAKNKIHIHLSKTLQEIFQTEMAIESIRKAIKEKSAFLKVAQTRLDERTRRPNIELCRDIAQLRLVNEVYEVDETIQTLQQRLRDSEDTLQSLAHTKATLEHDLAVKANTLYIDQEKCMSMRNSYPSTLRLVGFC.

O-linked (GalNAc...) threonine glycans are attached at residues T7 and T9. N-linked (GlcNAc...) asparagine glycans are attached at residues N41, N86, N111, and N276. A coiled-coil region spans residues 419-456 (RLVNEVYEVDETIQTLQQRLRDSEDTLQSLAHTKATLE).

This sequence belongs to the tektin family. As to quaternary structure, microtubule inner protein component of sperm flagellar doublet microtubules. Interacts with TEKT1, TEKT2, TEKT4 and TEKT5. Interacts with CCDC38. N- and O-glycosylated. In terms of processing, may be proteolytically processed during the epididymal transit of spermatozoa. Post-translationally, ubiquitinated, leading to its degradation. Deubiquitinated by USP16, promoting its stability. Expressed in epididymal sperm (at protein level).

The protein localises to the cytoplasm. It localises to the cytoskeleton. Its subcellular location is the cilium axoneme. It is found in the flagellum axoneme. The protein resides in the cytoplasmic vesicle. The protein localises to the secretory vesicle. It localises to the acrosome outer membrane. Functionally, microtubule inner protein (MIP) part of the dynein-decorated doublet microtubules (DMTs) in cilia and flagellar axoneme. Forms filamentous polymers in the walls of ciliary and flagellar microtubules. Required for normal sperm mobility. In Rattus norvegicus (Rat), this protein is Tektin-3 (Tekt3).